The following is a 138-amino-acid chain: Basic phospholipase A2 homolog bothropstoxin-II (138 aa).

Positions 1–16 are cleaved as a signal peptide; the sequence is MRTLWIMAVLLVGVEG. 7 disulfide bridges follow: Cys42/Cys131, Cys44/Cys60, Cys59/Cys111, Cys65/Cys138, Cys66/Cys104, Cys73/Cys97, and Cys91/Cys102. An important for membrane-damaging activities in eukaryotes and bacteria; heparin-binding region spans residues 121–133; it reads KRYMAYPDVLCKK.

The protein belongs to the phospholipase A2 family. Group II subfamily. D49 sub-subfamily. In terms of assembly, homodimer; non-covalently linked (probable alternative/compact dimer conformation). Expressed by the venom gland.

The protein resides in the secreted. Functionally, snake venom phospholipase A2 (PLA2) that shows low enzymatic activity even tough it conserves the catalytic residues. Shows a strong myotoxic activity and induces indirect hemolysis, anticoagulant properties, and cytotoxic activities. In vivo, it induces muscle necrosis, accompanied by polymorphonuclear cell infiltration, and edema in the mouse paw. It exerts its function even in the absence of extracellular calcium, indicating it is not a calcium-dependent enzyme. A model of myotoxic mechanism has been proposed: an apo Lys49-PLA2 is activated by the entrance of a hydrophobic molecule (e.g. fatty acid) at the hydrophobic channel of the protein leading to a reorientation of a monomer. This reorientation causes a transition between 'inactive' to 'active' states, causing alignment of C-terminal and membrane-docking sites (MDoS) side-by-side and putting the membrane-disruption sites (MDiS) in the same plane, exposed to solvent and in a symmetric position for both monomers. The MDoS region stabilizes the toxin on membrane by the interaction of charged residues with phospholipid head groups. Subsequently, the MDiS region destabilizes the membrane with penetration of hydrophobic residues. This insertion causes a disorganization of the membrane, allowing an uncontrolled influx of ions (i.e. calcium and sodium), and eventually triggering irreversible intracellular alterations and cell death. The chain is Basic phospholipase A2 homolog bothropstoxin-II from Bothrops jararacussu (Jararacussu).